The chain runs to 909 residues: Protein translocase subunit SecA (909 aa).

ATP-binding positions include Gln87, Gly105–Thr109, and Asp512. The tract at residues Leu863–Ser909 is disordered. Residues Met880–Arg889 show a composition bias toward basic and acidic residues. Cys893, Cys895, Cys904, and His905 together coordinate Zn(2+). Residues Arg899 to Ser909 show a composition bias toward basic residues.

Belongs to the SecA family. In terms of assembly, monomer and homodimer. Part of the essential Sec protein translocation apparatus which comprises SecA, SecYEG and auxiliary proteins SecDF-YajC and YidC. Zn(2+) is required as a cofactor.

The protein localises to the cell inner membrane. The protein resides in the cytoplasm. It carries out the reaction ATP + H2O + cellular proteinSide 1 = ADP + phosphate + cellular proteinSide 2.. Functionally, part of the Sec protein translocase complex. Interacts with the SecYEG preprotein conducting channel. Has a central role in coupling the hydrolysis of ATP to the transfer of proteins into and across the cell membrane, serving both as a receptor for the preprotein-SecB complex and as an ATP-driven molecular motor driving the stepwise translocation of polypeptide chains across the membrane. The polypeptide is Protein translocase subunit SecA (Shewanella putrefaciens (strain CN-32 / ATCC BAA-453)).